The primary structure comprises 2876 residues: Nipped-B-like protein B (2876 aa).

Polar residues-rich tracts occupy residues 124–142 and 149–167; these read PQNSMHGSPASNYQQTTIT and YVQTQAGSGSRYMPQQNSP. Disordered stretches follow at residues 124–197, 246–367, 439–494, and 525–1017; these read PQNS…PIQQ, NDEG…SDAE, RESA…AGNK, and EGPV…FPNY. Residues 276 to 290 show a composition bias toward pro residues; sequence GPRPPLILQSPPPYT. Positions 439–457 are enriched in basic and acidic residues; that stretch reads RESAIERERCSKEVQDKDK. A compositionally biased stretch (low complexity) spans 471-480; it reads PGAAGTAGAS. The span at 481 to 490 shows a compositional bias: gly residues; the sequence is GTPGVGGGCN. 3 stretches are compositionally biased toward basic and acidic residues: residues 556-577, 586-955, and 962-1005; these read SKTDGEVQRTVDGRPEVIKQRV, VDGR…EQRS, and VKQE…HKPQ. The PxVxL motif motif lies at 1068-1081; it reads NKGAKPVVVLKKLS. 2 disordered regions span residues 1088-1229 and 1724-1747; these read MISN…EPKL and TEKAMKSQRDDDSSDGPHHAKDVE. Residues 1090 to 1100 show a composition bias toward low complexity; it reads SNSRSSKSSRS. 2 stretches are compositionally biased toward basic and acidic residues: residues 1104-1119 and 1156-1183; these read RFRETDSRLPLCERVK and KDRDKTWEYEEKDRRGSGDHRRSFDSRR. Residues 1212–1223 are compositionally biased toward basic residues; sequence KLKKKEKQKKRK. HEAT repeat units follow at residues 1803 to 1841, 1879 to 1917, 1981 to 2020, 2203 to 2241, and 2349 to 2387; these read AQSFDIYLTQILRVLGESAIAVRTKAMKCLSEVVAVDPS, PQLTEQYYDMLIERILDTGISVRKRVIKILRDICLEQPT, YDWFEQLLQNLLKSEEDASYKPARKACAQLVDSLVEHILK, VVIKDKVLELLLYFTKNDDEEVQTKAIIGLGFLFIQDPG, and LIHPVQCVPYLIAMGTDSEPTMRNKADQQLVEIDKKYTG. Disordered regions lie at residues 2516–2590 and 2728–2774; these read EVVK…DSDL and ALLG…GHRN. Positions 2519–2537 are enriched in basic residues; that stretch reads KKKKKKKKKKKQKQKRGKK. Residues 2548–2563 are compositionally biased toward low complexity; it reads RSSSSSSSSSSSSSDS. Residues 2762 to 2774 are compositionally biased toward basic and acidic residues; it reads RTGDSAEASGHRN.

The protein belongs to the SCC2/Nipped-B family.

The protein localises to the nucleus. Functionally, may play a structural role in chromatin. Involved in sister chromatid cohesion, possibly by facilitating the cohesin complex loading. Transcription factor, which may promote cortical neuron migration during brain development by regulating the transcription of crucial genes in this process. This Danio rerio (Zebrafish) protein is Nipped-B-like protein B (nipblb).